A 194-amino-acid chain; its full sequence is uncharacterized protein (194 aa).

It belongs to the calycin superfamily. Fatty-acid binding protein (FABP) family.

This is an uncharacterized protein from Caenorhabditis elegans.